Here is a 215-residue protein sequence, read N- to C-terminus: Urease accessory protein UreG (215 aa).

The tract at residues 1–21 (MNAPASSPARRTKKLPPLRVG) is disordered. 24–31 (GPVGSGKT) serves as a coordination point for GTP.

Belongs to the SIMIBI class G3E GTPase family. UreG subfamily. In terms of assembly, homodimer. UreD, UreF and UreG form a complex that acts as a GTP-hydrolysis-dependent molecular chaperone, activating the urease apoprotein by helping to assemble the nickel containing metallocenter of UreC. The UreE protein probably delivers the nickel.

The protein resides in the cytoplasm. In terms of biological role, facilitates the functional incorporation of the urease nickel metallocenter. This process requires GTP hydrolysis, probably effectuated by UreG. The chain is Urease accessory protein UreG from Burkholderia vietnamiensis (strain G4 / LMG 22486) (Burkholderia cepacia (strain R1808)).